Reading from the N-terminus, the 93-residue chain is U11-ctenitoxin-Pn1a (93 aa).

A signal peptide spans 1-21; it reads MKCAVLFLSVIALVHIFVVEA. Residues 22 to 34 constitute a propeptide that is removed on maturation; it reads EEEPDSDALVPQE. Cystine bridges form between C37–C51, C44–C57, C50–C75, C59–C73, and C83–C90.

It belongs to the neurotoxin 09 (Tx3-6) family. In terms of tissue distribution, expressed by the venom gland.

The protein resides in the secreted. Its function is as follows. Probable neurotoxin. The protein is U11-ctenitoxin-Pn1a of Phoneutria nigriventer (Brazilian armed spider).